The sequence spans 113 residues: MAHSAAAVPLGALEQGCPIRVEHDRRRRQFTVRLNGCHDRAVLLYEYVGKRIVDLQHTEVPDAYRGRGIAKHLAKAALDFVVEEDLKAHLTCWYIQKYVKENPLPQYLERLQP.

Positions 22 to 112 (EHDRRRRQFT…PLPQYLERLQ (91 aa)) constitute an N-acetyltransferase domain.

The protein belongs to the NATD1 family.

This is Protein NATD1 (NATD1) from Homo sapiens (Human).